The chain runs to 398 residues: MDTQAIKHSVQHSGRYNRKGFESPTQRAKALGESYQSDLIASIRENNFSFEKGRLKIKLAKSFGFCWGVERAVAMAYETRRHYPNEDIWMTNEIIHNPSVNNHLSRMNVKIISAKNGIKDFSSVSTGDVVILPAFGATVQEMQLLHEKKCQIIDTTCPWVSKVWHTVEKHKKHTFTSIIHGKYKHEETLATRSFAGNYLVVFDLDEAEYVSNYIQGHGDKNKFMNKFAKACSDGFDPDVHLERIGVANQTTMLKSETEEIGKFFEKTMLMKYGPANINDHFLAFNTICDATEERQDAMFSLVNEDLDILVVIGGFNSSNTTHLQEIAISNNIESFHIDISDRISVENNSICHKPLESELILKKNFIPDGKIKVGITSGASTPDKIVADVIEKLIAITQ.

C66 lines the [4Fe-4S] cluster pocket. H96 is a binding site for (2E)-4-hydroxy-3-methylbut-2-enyl diphosphate. H96 provides a ligand contact to dimethylallyl diphosphate. H96 is an isopentenyl diphosphate binding site. C157 contacts [4Fe-4S] cluster. H185 contributes to the (2E)-4-hydroxy-3-methylbut-2-enyl diphosphate binding site. Position 185 (H185) interacts with dimethylallyl diphosphate. H185 contributes to the isopentenyl diphosphate binding site. E187 (proton donor) is an active-site residue. Residue T250 participates in (2E)-4-hydroxy-3-methylbut-2-enyl diphosphate binding. C288 is a binding site for [4Fe-4S] cluster. (2E)-4-hydroxy-3-methylbut-2-enyl diphosphate contacts are provided by S317, S318, N319, and S380. Dimethylallyl diphosphate contacts are provided by S317, S318, N319, and S380. Isopentenyl diphosphate is bound by residues S317, S318, N319, and S380.

This sequence belongs to the IspH family. The cofactor is [4Fe-4S] cluster.

It carries out the reaction isopentenyl diphosphate + 2 oxidized [2Fe-2S]-[ferredoxin] + H2O = (2E)-4-hydroxy-3-methylbut-2-enyl diphosphate + 2 reduced [2Fe-2S]-[ferredoxin] + 2 H(+). The enzyme catalyses dimethylallyl diphosphate + 2 oxidized [2Fe-2S]-[ferredoxin] + H2O = (2E)-4-hydroxy-3-methylbut-2-enyl diphosphate + 2 reduced [2Fe-2S]-[ferredoxin] + 2 H(+). Its pathway is isoprenoid biosynthesis; dimethylallyl diphosphate biosynthesis; dimethylallyl diphosphate from (2E)-4-hydroxy-3-methylbutenyl diphosphate: step 1/1. The protein operates within isoprenoid biosynthesis; isopentenyl diphosphate biosynthesis via DXP pathway; isopentenyl diphosphate from 1-deoxy-D-xylulose 5-phosphate: step 6/6. Its function is as follows. Catalyzes the conversion of 1-hydroxy-2-methyl-2-(E)-butenyl 4-diphosphate (HMBPP) into a mixture of isopentenyl diphosphate (IPP) and dimethylallyl diphosphate (DMAPP). Acts in the terminal step of the DOXP/MEP pathway for isoprenoid precursor biosynthesis. The protein is 4-hydroxy-3-methylbut-2-enyl diphosphate reductase of Prochlorococcus marinus (strain MIT 9515).